Here is a 112-residue protein sequence, read N- to C-terminus: RHVCHLANATISAEKDHCPVCITFTTSICTGYCQTMDPVYKTALSSFKQNICTYKEIRYDTIKLPDCLPGTDPFFTYPVALSCYCDLCKMDYSDCTVESSEPDVCMKRRISI.

6 cysteine pairs are disulfide-bonded: Cys-4/Cys-52, Cys-18/Cys-67, Cys-21/Cys-105, Cys-29/Cys-83, Cys-33/Cys-85, and Cys-88/Cys-95. N-linked (GlcNAc...) asparagine glycosylation occurs at Asn-8.

The protein belongs to the glycoprotein hormones subunit beta family. Heterodimer of a common alpha chain and a unique beta chain which confers biological specificity to thyrotropin, lutropin, follitropin and gonadotropin.

The protein resides in the secreted. This is Lutropin subunit beta (lhb) from Aquarana catesbeiana (American bullfrog).